Here is a 62-residue protein sequence, read N- to C-terminus: Large ribosomal subunit protein uL30 (62 aa).

It belongs to the universal ribosomal protein uL30 family. In terms of assembly, part of the 50S ribosomal subunit.

The protein is Large ribosomal subunit protein uL30 of Pseudoalteromonas atlantica (strain T6c / ATCC BAA-1087).